We begin with the raw amino-acid sequence, 277 residues long: Phosphoenolpyruvate synthase regulatory protein (277 aa).

Residue 157–164 participates in ADP binding; it reads GVSRCGKT.

It belongs to the pyruvate, phosphate/water dikinase regulatory protein family. PSRP subfamily.

It carries out the reaction [pyruvate, water dikinase] + ADP = [pyruvate, water dikinase]-phosphate + AMP + H(+). The catalysed reaction is [pyruvate, water dikinase]-phosphate + phosphate + H(+) = [pyruvate, water dikinase] + diphosphate. Functionally, bifunctional serine/threonine kinase and phosphorylase involved in the regulation of the phosphoenolpyruvate synthase (PEPS) by catalyzing its phosphorylation/dephosphorylation. This chain is Phosphoenolpyruvate synthase regulatory protein, found in Escherichia coli O6:K15:H31 (strain 536 / UPEC).